The primary structure comprises 257 residues: Homeobox protein ceh-36 (257 aa).

Low complexity predominate over residues 33 to 49 (SATTSSTTMAPMAPNSE). 2 disordered regions span residues 33 to 63 (SATTSSTTMAPMAPNSESGRRAGRRERTSFN) and 113 to 156 (DRNN…GTPE). The segment at residues 55-117 (GRRERTSFNR…NRRAKDRNNK (63 aa)) is a DNA-binding region (homeobox). Residues 123-137 (HPGSTSSRSSNGSPH) are compositionally biased toward low complexity.

It belongs to the paired homeobox family. In terms of assembly, interacts with sox-2. Expressed in ASE and AWC chemosensory neurons. Expressed left-right asymmetrically in the embryo, in the grandmother cell and the mother cell to the MI pharyngeal motorneuron but in neither analogous precursors of the e3D neuron.

The protein localises to the nucleus. Functionally, probable transcription factor, acting as a progenitor identity factor regulating the development of lineally-related embryonic cells including glial, excretory and neuronal cells. Mediates chemosensory function of ASE and AWC neurons. In ASE neurons, required to diversify the fate of the ASEL neurons from the ASER neurons. Acts cell-autonomously to establish a neuronal left right asymmetry, possibly promoting asymmetric expression of the helix-loop-helix proteins ngn-1 and hlh-2. In cooperation with the transcription factor sox-2, required for the differentiation of AWC olfactory neurons. May regulate the expression of sox-2 in AWC olfactory neurons. In Caenorhabditis elegans, this protein is Homeobox protein ceh-36.